Here is a 229-residue protein sequence, read N- to C-terminus: Clathrin light chain B (229 aa).

Composition is skewed to low complexity over residues 1–17 (MAEDFGFFSSSESGAPE) and 45–58 (GAPAASQVASAQPG). The tract at residues 1-80 (MAEDFGFFSS…TVNGDVFQEA (80 aa)) is disordered. Phosphoserine is present on residues Ser-11 and Ser-13. Positions 93 to 155 (ADRLTQEPES…QVEKNKINNR (63 aa)) are involved in binding clathrin heavy chain. Residue Thr-187 is modified to Phosphothreonine. A disulfide bridge links Cys-199 with Cys-209. Lys-204 carries the post-translational modification N6-acetyllysine. Ser-217 is subject to Phosphoserine.

The protein belongs to the clathrin light chain family. As to quaternary structure, clathrin coats are formed from molecules containing 3 heavy chains and 3 light chains. Interacts (via N-terminus) with HIP1. Interacts with HIP1R.

The protein resides in the cytoplasmic vesicle membrane. It localises to the membrane. It is found in the coated pit. In terms of biological role, clathrin is the major protein of the polyhedral coat of coated pits and vesicles. The sequence is that of Clathrin light chain B (Cltb) from Rattus norvegicus (Rat).